A 282-amino-acid chain; its full sequence is MEIVLAKRAGFCFGVKRATQMAFEAAEKEGETFTLGPIIHSPQVVQRLEGMGVKVLSDLEGIGNGTVIIRSHGVTSAELEDAVRRQLEVVDATCPFVKKAQEHVKRLSHDGYTVVVVGDADHPEVQGIVSYAEGPVHVVGSGEEAARLPNMKKVGVVAQTTQSFETLKNVVKECLLKGGEIRVFNTICDATAVRQDEAKALAREVDCMIVIGGFNSANTKRLAEVCSELQPRTYHIETAQELDASWFQGVERVGVTAGASTPKWLIDEVIERIQEFDNKKKG.

C12 contacts [4Fe-4S] cluster. Residues H40 and H72 each coordinate (2E)-4-hydroxy-3-methylbut-2-enyl diphosphate. Residues H40 and H72 each contribute to the dimethylallyl diphosphate site. Isopentenyl diphosphate contacts are provided by H40 and H72. Position 94 (C94) interacts with [4Fe-4S] cluster. H122 serves as a coordination point for (2E)-4-hydroxy-3-methylbut-2-enyl diphosphate. H122 contributes to the dimethylallyl diphosphate binding site. H122 lines the isopentenyl diphosphate pocket. E124 serves as the catalytic Proton donor. T160 is a (2E)-4-hydroxy-3-methylbut-2-enyl diphosphate binding site. C188 contributes to the [4Fe-4S] cluster binding site. (2E)-4-hydroxy-3-methylbut-2-enyl diphosphate is bound by residues S216, N218, and S260. The dimethylallyl diphosphate site is built by S216, N218, and S260. Isopentenyl diphosphate-binding residues include S216, N218, and S260.

This sequence belongs to the IspH family. [4Fe-4S] cluster is required as a cofactor.

The catalysed reaction is isopentenyl diphosphate + 2 oxidized [2Fe-2S]-[ferredoxin] + H2O = (2E)-4-hydroxy-3-methylbut-2-enyl diphosphate + 2 reduced [2Fe-2S]-[ferredoxin] + 2 H(+). It carries out the reaction dimethylallyl diphosphate + 2 oxidized [2Fe-2S]-[ferredoxin] + H2O = (2E)-4-hydroxy-3-methylbut-2-enyl diphosphate + 2 reduced [2Fe-2S]-[ferredoxin] + 2 H(+). It participates in isoprenoid biosynthesis; dimethylallyl diphosphate biosynthesis; dimethylallyl diphosphate from (2E)-4-hydroxy-3-methylbutenyl diphosphate: step 1/1. It functions in the pathway isoprenoid biosynthesis; isopentenyl diphosphate biosynthesis via DXP pathway; isopentenyl diphosphate from 1-deoxy-D-xylulose 5-phosphate: step 6/6. Functionally, catalyzes the conversion of 1-hydroxy-2-methyl-2-(E)-butenyl 4-diphosphate (HMBPP) into a mixture of isopentenyl diphosphate (IPP) and dimethylallyl diphosphate (DMAPP). Acts in the terminal step of the DOXP/MEP pathway for isoprenoid precursor biosynthesis. In Geobacter sulfurreducens (strain ATCC 51573 / DSM 12127 / PCA), this protein is 4-hydroxy-3-methylbut-2-enyl diphosphate reductase.